Consider the following 366-residue polypeptide: tRNA pseudouridine synthase B (366 aa).

Residues 1–55 (MTVTTPDALLAPHDVQHAGADESAAQIRKPRDNNDPRNANRGGGNGKPRRDKRDV) form a disordered region. Catalysis depends on aspartate 92, which acts as the Nucleophile.

The protein belongs to the pseudouridine synthase TruB family. Type 1 subfamily.

It catalyses the reaction uridine(55) in tRNA = pseudouridine(55) in tRNA. In terms of biological role, responsible for synthesis of pseudouridine from uracil-55 in the psi GC loop of transfer RNAs. This Rhodopseudomonas palustris (strain ATCC BAA-98 / CGA009) protein is tRNA pseudouridine synthase B.